A 389-amino-acid polypeptide reads, in one-letter code: Putative RNA methyltransferase R405 (389 aa).

Residues Q207, D261, and D314 each contribute to the S-adenosyl-L-methionine site. The active-site Nucleophile is the C342.

It belongs to the class I-like SAM-binding methyltransferase superfamily. RNA M5U methyltransferase family.

This Acanthamoeba polyphaga (Amoeba) protein is Putative RNA methyltransferase R405.